The sequence spans 224 residues: Oxalate oxidase GF-2.8 (224 aa).

An N-terminal signal peptide occupies residues 1–23 (MGYSKTLVAGLFAMLLLAPAVLA). The cysteines at positions 33 and 49 are disulfide-linked. One can recognise a Cupin type-1 domain in the interval 63 to 214 (SKLAKAGNTS…ALRVEARVVE (152 aa)). Residues Asn70 and Asn75 are each glycosylated (N-linked (GlcNAc...) asparagine). Mn(2+) contacts are provided by His111, His113, Glu118, and His160.

The protein belongs to the germin family. Oligomer (believed to be a pentamer but probably hexamer).

The protein localises to the secreted. The protein resides in the extracellular space. It is found in the apoplast. Its subcellular location is the cytoplasm. It localises to the cell wall. It catalyses the reaction oxalate + O2 + 2 H(+) = H2O2 + 2 CO2. Its function is as follows. Produces developmental and stress-related release of hydrogen peroxide in the apoplast. May play an important role in several aspects of plant growth and defense mechanisms. The polypeptide is Oxalate oxidase GF-2.8 (Triticum aestivum (Wheat)).